A 365-amino-acid polypeptide reads, in one-letter code: Methylthioribose-1-phosphate isomerase (365 aa).

The Proton donor role is filled by Asp249.

This sequence belongs to the eIF-2B alpha/beta/delta subunits family. MtnA subfamily.

It localises to the cytoplasm. Its subcellular location is the nucleus. The enzyme catalyses 5-(methylsulfanyl)-alpha-D-ribose 1-phosphate = 5-(methylsulfanyl)-D-ribulose 1-phosphate. The protein operates within amino-acid biosynthesis; L-methionine biosynthesis via salvage pathway; L-methionine from S-methyl-5-thio-alpha-D-ribose 1-phosphate: step 1/6. Its function is as follows. Catalyzes the interconversion of methylthioribose-1-phosphate (MTR-1-P) into methylthioribulose-1-phosphate (MTRu-1-P). In Ostreococcus lucimarinus (strain CCE9901), this protein is Methylthioribose-1-phosphate isomerase.